The sequence spans 227 residues: PKHD-type hydroxylase NE2125 (227 aa).

The Fe2OG dioxygenase domain occupies 78–179 (KIVPPFFNRY…RLACFMFIQS (102 aa)). The Fe cation site is built by His-97, Asp-99, and His-160. Arg-170 is a binding site for 2-oxoglutarate.

Fe(2+) serves as cofactor. It depends on L-ascorbate as a cofactor.

In Nitrosomonas europaea (strain ATCC 19718 / CIP 103999 / KCTC 2705 / NBRC 14298), this protein is PKHD-type hydroxylase NE2125.